The chain runs to 262 residues: Alpha-tubulin N-acetyltransferase 1 (262 aa).

In terms of domain architecture, N-acetyltransferase spans 1–177 (MQVDADLRPI…TNFVVFEELF (177 aa)). 111-124 (FYVHFSCQRQGVGQ) is an acetyl-CoA binding site.

Belongs to the acetyltransferase ATAT1 family. Expressed solely in touch receptor neurons.

The enzyme catalyses L-lysyl-[alpha-tubulin] + acetyl-CoA = N(6)-acetyl-L-lysyl-[alpha-tubulin] + CoA + H(+). Functionally, specifically acetylates 'Lys-40' in alpha-tubulin/mec-12 on the lumenal side of microtubules. Promotes microtubule destabilization and accelerates microtubule dynamics; this activity may be independent of acetylation activity. Acetylates alpha-tubulin with a slow enzymatic rate, due to a catalytic site that is not optimized for acetyl transfer. Enters the microtubule through each end and diffuses quickly throughout the lumen of microtubules. Acetylates only long/old microtubules because of its slow acetylation rate since it does not have time to act on dynamically unstable microtubules before the enzyme is released. Required for the maintenance of touch receptor neurons and possibly other type of neurons involved in locomotion. Regulates the number and localization of mitochondria in mechanosensory neurons. Plays a role in axonal transport. The sequence is that of Alpha-tubulin N-acetyltransferase 1 from Caenorhabditis elegans.